A 311-amino-acid chain; its full sequence is Aspartate carbamoyltransferase catalytic subunit (311 aa).

Positions 55 and 56 each coordinate carbamoyl phosphate. Lys-85 is a binding site for L-aspartate. Arg-106, His-135, and Gln-138 together coordinate carbamoyl phosphate. 2 residues coordinate L-aspartate: Arg-168 and Arg-230. Carbamoyl phosphate contacts are provided by Leu-268 and Pro-269.

This sequence belongs to the aspartate/ornithine carbamoyltransferase superfamily. ATCase family. Heterododecamer (2C3:3R2) of six catalytic PyrB chains organized as two trimers (C3), and six regulatory PyrI chains organized as three dimers (R2).

It catalyses the reaction carbamoyl phosphate + L-aspartate = N-carbamoyl-L-aspartate + phosphate + H(+). It functions in the pathway pyrimidine metabolism; UMP biosynthesis via de novo pathway; (S)-dihydroorotate from bicarbonate: step 2/3. Its function is as follows. Catalyzes the condensation of carbamoyl phosphate and aspartate to form carbamoyl aspartate and inorganic phosphate, the committed step in the de novo pyrimidine nucleotide biosynthesis pathway. The chain is Aspartate carbamoyltransferase catalytic subunit from Pectobacterium atrosepticum (strain SCRI 1043 / ATCC BAA-672) (Erwinia carotovora subsp. atroseptica).